Here is a 350-residue protein sequence, read N- to C-terminus: Enoyl-[acyl-carrier-protein] reductase, mitochondrial (350 aa).

The transit peptide at 1–12 directs the protein to the mitochondrion; that stretch reads MWLGLRLFHRPF. Tyr-68 functions as the Proton donor in the catalytic mechanism. Residues Asn-141, 167–170, 190–192, 259–262, 284–286, and Lys-345 each bind NADP(+); these read NSGV, RDR, YGGM, and FWV.

This sequence belongs to the zinc-containing alcohol dehydrogenase family. Quinone oxidoreductase subfamily. In terms of assembly, homodimer. Expressed in the developing pronephros.

The protein resides in the mitochondrion. It carries out the reaction a 2,3-saturated acyl-[ACP] + NADP(+) = a (2E)-enoyl-[ACP] + NADPH + H(+). Catalyzes the NADPH-dependent reduction of trans-2-enoyl thioesters in mitochondrial fatty acid synthesis (fatty acid synthesis type II). Fatty acid chain elongation in mitochondria uses acyl carrier protein (ACP) as an acyl group carrier, but the enzyme accepts both ACP and CoA thioesters as substrates in vitro. May provide the octanoyl chain used for lipoic acid biosynthesis, regulating protein lipoylation and mitochondrial respiratory activity. Involved in iron homeostasis; affecting Fe-S cluster assembly and ceramide metabolism. Required for proper morphology and bioenergetic functions of mitochondria. Required for maintenance of neurons. Functions in pronephros development, regulating late differentiation of all pronephric tubule segments. This Xenopus tropicalis (Western clawed frog) protein is Enoyl-[acyl-carrier-protein] reductase, mitochondrial (mecr).